The sequence spans 805 residues: Endonuclease MutS2 (805 aa).

344 to 351 is an ATP binding site; that stretch reads GPNGGGKT. The interval 705–724 is disordered; it reads RSRSEKLQAASEARPSAPPG. In terms of domain architecture, Smr spans 729–804; the sequence is LDVRGLRVEE…GDAVTVVSLR (76 aa).

It belongs to the DNA mismatch repair MutS family. MutS2 subfamily. Homodimer. Binds to stalled ribosomes, contacting rRNA.

Its function is as follows. Endonuclease that is involved in the suppression of homologous recombination and thus may have a key role in the control of bacterial genetic diversity. In terms of biological role, acts as a ribosome collision sensor, splitting the ribosome into its 2 subunits. Detects stalled/collided 70S ribosomes which it binds and splits by an ATP-hydrolysis driven conformational change. Acts upstream of the ribosome quality control system (RQC), a ribosome-associated complex that mediates the extraction of incompletely synthesized nascent chains from stalled ribosomes and their subsequent degradation. Probably generates substrates for RQC. The polypeptide is Endonuclease MutS2 (Anaeromyxobacter sp. (strain Fw109-5)).